The following is a 163-amino-acid chain: Endoribonuclease YbeY (163 aa).

His126, His130, and His136 together coordinate Zn(2+).

Belongs to the endoribonuclease YbeY family. The cofactor is Zn(2+).

The protein localises to the cytoplasm. Its function is as follows. Single strand-specific metallo-endoribonuclease involved in late-stage 70S ribosome quality control and in maturation of the 3' terminus of the 16S rRNA. This is Endoribonuclease YbeY from Chelativorans sp. (strain BNC1).